Reading from the N-terminus, the 238-residue chain is Uridylate kinase (238 aa).

12–15 (KLSG) is an ATP binding site. G54 contacts UMP. Residues G55 and R59 each contribute to the ATP site. UMP contacts are provided by residues D74 and 135–142 (TGNPYFTT). Positions 162, 163, 168, and 171 each coordinate ATP.

The protein belongs to the UMP kinase family. Homohexamer.

The protein localises to the cytoplasm. It catalyses the reaction UMP + ATP = UDP + ADP. The protein operates within pyrimidine metabolism; CTP biosynthesis via de novo pathway; UDP from UMP (UMPK route): step 1/1. With respect to regulation, inhibited by UTP. Its function is as follows. Catalyzes the reversible phosphorylation of UMP to UDP. The chain is Uridylate kinase from Nitrobacter hamburgensis (strain DSM 10229 / NCIMB 13809 / X14).